We begin with the raw amino-acid sequence, 479 residues long: Poly(A) polymerase catalytic subunit (479 aa).

Residues aspartate 202 and aspartate 204 contribute to the active site. The Ca(2+) site is built by aspartate 202, aspartate 204, and aspartate 253.

It belongs to the poxviridae poly(A) polymerase catalytic subunit family. In terms of assembly, heterodimer of a large (catalytic) subunit and a small (regulatory) subunit.

It carries out the reaction RNA(n) + ATP = RNA(n)-3'-adenine ribonucleotide + diphosphate. Polymerase that creates the 3'-poly(A) tail of mRNA's. This chain is Poly(A) polymerase catalytic subunit (OPG063), found in Cowpox virus (strain GRI-90 / Grishak) (CPV).